A 245-amino-acid polypeptide reads, in one-letter code: RNA polymerase sigma factor SigI5 (245 aa).

The Polymerase core binding signature appears at 60–73; it reads DEYSIGLMAFNEAI. Positions 202–221 form a DNA-binding region, H-T-H motif; it reads MKELSKIIDVHPKTVERNRA.

The protein belongs to the sigma-70 factor family. SigI subfamily. As to quaternary structure, interacts with RsgI5.

It localises to the cytoplasm. Negatively regulated by the anti-sigma-I factor RsgI5. Binding of the polysaccharide substrate to RsgI5 may lead to the release and activation of SigI5. Functionally, sigma factors are initiation factors that promote the attachment of RNA polymerase to specific initiation sites and are then released. This sigma factor is involved in regulation of cellulosomal genes via an external polysaccharide-sensing mechanism. This Acetivibrio thermocellus (strain ATCC 27405 / DSM 1237 / JCM 9322 / NBRC 103400 / NCIMB 10682 / NRRL B-4536 / VPI 7372) (Clostridium thermocellum) protein is RNA polymerase sigma factor SigI5.